Consider the following 121-residue polypeptide: Protein PilH (121 aa).

Residues 3–119 (RILIVDDSPT…TLLKTINAVL (117 aa)) enclose the Response regulatory domain. Asp52 carries the post-translational modification 4-aspartylphosphate.

Its function is as follows. May be a part of a signal-transduction system that regulates twitching motility by controlling pilus function (extension and retraction). The polypeptide is Protein PilH (pilH) (Pseudomonas aeruginosa (strain ATCC 15692 / DSM 22644 / CIP 104116 / JCM 14847 / LMG 12228 / 1C / PRS 101 / PAO1)).